The primary structure comprises 160 residues: SsrA-binding protein (160 aa).

It belongs to the SmpB family.

The protein resides in the cytoplasm. Its function is as follows. Required for rescue of stalled ribosomes mediated by trans-translation. Binds to transfer-messenger RNA (tmRNA), required for stable association of tmRNA with ribosomes. tmRNA and SmpB together mimic tRNA shape, replacing the anticodon stem-loop with SmpB. tmRNA is encoded by the ssrA gene; the 2 termini fold to resemble tRNA(Ala) and it encodes a 'tag peptide', a short internal open reading frame. During trans-translation Ala-aminoacylated tmRNA acts like a tRNA, entering the A-site of stalled ribosomes, displacing the stalled mRNA. The ribosome then switches to translate the ORF on the tmRNA; the nascent peptide is terminated with the 'tag peptide' encoded by the tmRNA and targeted for degradation. The ribosome is freed to recommence translation, which seems to be the essential function of trans-translation. This Pectobacterium carotovorum subsp. carotovorum (strain PC1) protein is SsrA-binding protein.